Here is an 85-residue protein sequence, read N- to C-terminus: Small ribosomal subunit protein uS17 (85 aa).

It belongs to the universal ribosomal protein uS17 family. In terms of assembly, part of the 30S ribosomal subunit.

Its function is as follows. One of the primary rRNA binding proteins, it binds specifically to the 5'-end of 16S ribosomal RNA. This is Small ribosomal subunit protein uS17 from Desulforapulum autotrophicum (strain ATCC 43914 / DSM 3382 / VKM B-1955 / HRM2) (Desulfobacterium autotrophicum).